The sequence spans 320 residues: Cell-cell adhesion glycoprotein 64 (320 aa).

The N-terminal stretch at 1 to 19 (MNKFITLFVLLASVSVAMS) is a signal peptide. 9 disulfides stabilise this stretch: C39-C57, C67-C79, C73-C86, C98-C110, C104-C115, C123-C138, C132-C147, C157-C171, and C165-C176. A glycan (N-linked (GlcNAc...) asparagine) is linked at N49. N-linked (GlcNAc...) asparagine glycosylation is present at N80. N-linked (GlcNAc...) asparagine glycans are attached at residues N141 and N158. N-linked (GlcNAc...) asparagine glycosylation is present at N187. Intrachain disulfides connect C188–C202 and C194–C207. N216 is a glycosylation site (N-linked (GlcNAc...) asparagine). Intrachain disulfides connect C226/C246, C232/C234, C266/C285, and C270/C281. The GPI-like-anchor amidated serine moiety is linked to residue S298. A propeptide spans 299-320 (SATTIAFNAFVVFAIVLSVLLF) (removed in mature form).

Post-translationally, contains 18 disulfide bonds. In terms of processing, the GPI-like-anchor contains a phosphoceramide group, rather than a phosphatidyl group.

It localises to the cell membrane. Cell-cell adhesion during development. In Heterostelium pallidum (Cellular slime mold), this protein is Cell-cell adhesion glycoprotein 64.